The primary structure comprises 209 residues: uncharacterized protein (209 aa).

3 consecutive transmembrane segments (helical) span residues 26–48, 147–169, and 179–196; these read LRYF…GLAV, AYLV…PFLM, and IVAA…VYLL.

The protein localises to the cell membrane. This is an uncharacterized protein from Archaeoglobus fulgidus (strain ATCC 49558 / DSM 4304 / JCM 9628 / NBRC 100126 / VC-16).